We begin with the raw amino-acid sequence, 146 residues long: Hemoglobin subunit beta (146 aa).

The residue at position 1 (valine 1) is an N-acetylvaline. The 145-residue stretch at 2-146 (ELTAEEKAAV…VANALAHKYH (145 aa)) folds into the Globin domain. Serine 44 is modified (phosphoserine). An N6-acetyllysine modification is found at lysine 59. Histidine 63 contributes to the heme b binding site. Lysine 82 carries the post-translational modification N6-acetyllysine. Position 92 (histidine 92) interacts with heme b. S-nitrosocysteine is present on cysteine 93. The residue at position 144 (lysine 144) is an N6-acetyllysine.

Belongs to the globin family. As to quaternary structure, heterotetramer of two alpha chains and two beta chains. Red blood cells.

Involved in oxygen transport from the lung to the various peripheral tissues. In Ceratotherium simum (White rhinoceros), this protein is Hemoglobin subunit beta (HBB).